A 133-amino-acid chain; its full sequence is Ribosome-binding factor A (133 aa).

The protein belongs to the RbfA family. As to quaternary structure, monomer. Binds 30S ribosomal subunits, but not 50S ribosomal subunits or 70S ribosomes.

The protein resides in the cytoplasm. In terms of biological role, one of several proteins that assist in the late maturation steps of the functional core of the 30S ribosomal subunit. Associates with free 30S ribosomal subunits (but not with 30S subunits that are part of 70S ribosomes or polysomes). Required for efficient processing of 16S rRNA. May interact with the 5'-terminal helix region of 16S rRNA. In Chlamydia muridarum (strain MoPn / Nigg), this protein is Ribosome-binding factor A.